Here is a 265-residue protein sequence, read N- to C-terminus: NAD kinase 2 (265 aa).

The active-site Proton acceptor is the aspartate 51. Residues 51-52, 122-123, arginine 149, aspartate 151, 162-167, and alanine 186 contribute to the NAD(+) site; these read DG, NE, and TAYNKS.

The protein belongs to the NAD kinase family. It depends on a divalent metal cation as a cofactor.

The protein localises to the cytoplasm. The enzyme catalyses NAD(+) + ATP = ADP + NADP(+) + H(+). In terms of biological role, involved in the regulation of the intracellular balance of NAD and NADP, and is a key enzyme in the biosynthesis of NADP. Catalyzes specifically the phosphorylation on 2'-hydroxyl of the adenosine moiety of NAD to yield NADP. The polypeptide is NAD kinase 2 (Bacillus licheniformis (strain ATCC 14580 / DSM 13 / JCM 2505 / CCUG 7422 / NBRC 12200 / NCIMB 9375 / NCTC 10341 / NRRL NRS-1264 / Gibson 46)).